The chain runs to 135 residues: uncharacterized protein (135 aa).

2 helical membrane passes run 11–31 (ILFFGLAFILVGFGLILGYLI) and 57–77 (LGTAAAVAGGVIAGELITDAI).

Its subcellular location is the cell membrane. This is an uncharacterized protein from Methanocaldococcus jannaschii (strain ATCC 43067 / DSM 2661 / JAL-1 / JCM 10045 / NBRC 100440) (Methanococcus jannaschii).